Here is a 339-residue protein sequence, read N- to C-terminus: Ketol-acid reductoisomerase (NADP(+)) (339 aa).

In terms of domain architecture, KARI N-terminal Rossmann spans 1 to 182 (MRVYYDRDAD…GGGRAGIIET (182 aa)). Residues 24–27 (YGSQ), R48, S51, T53, and 83–86 (DELQ) each bind NADP(+). The active site involves H108. G134 is a binding site for NADP(+). The KARI C-terminal knotted domain maps to 183–328 (TFKEECETDL…AKLRGMMPWI (146 aa)). 4 residues coordinate Mg(2+): D191, E195, E227, and E231. A substrate-binding site is contributed by S252.

This sequence belongs to the ketol-acid reductoisomerase family. It depends on Mg(2+) as a cofactor.

It catalyses the reaction (2R)-2,3-dihydroxy-3-methylbutanoate + NADP(+) = (2S)-2-acetolactate + NADPH + H(+). The catalysed reaction is (2R,3R)-2,3-dihydroxy-3-methylpentanoate + NADP(+) = (S)-2-ethyl-2-hydroxy-3-oxobutanoate + NADPH + H(+). It functions in the pathway amino-acid biosynthesis; L-isoleucine biosynthesis; L-isoleucine from 2-oxobutanoate: step 2/4. It participates in amino-acid biosynthesis; L-valine biosynthesis; L-valine from pyruvate: step 2/4. Involved in the biosynthesis of branched-chain amino acids (BCAA). Catalyzes an alkyl-migration followed by a ketol-acid reduction of (S)-2-acetolactate (S2AL) to yield (R)-2,3-dihydroxy-isovalerate. In the isomerase reaction, S2AL is rearranged via a Mg-dependent methyl migration to produce 3-hydroxy-3-methyl-2-ketobutyrate (HMKB). In the reductase reaction, this 2-ketoacid undergoes a metal-dependent reduction by NADPH to yield (R)-2,3-dihydroxy-isovalerate. The protein is Ketol-acid reductoisomerase (NADP(+)) of Methylorubrum populi (strain ATCC BAA-705 / NCIMB 13946 / BJ001) (Methylobacterium populi).